The chain runs to 431 residues: Growth-regulating factor 9 (431 aa).

The region spanning 24-59 (WMKAAQLMEFRMQALVYRYIEAGLRVPHHLVVPIWN) is the QLQ domain. WRC domains are found at residues 89-133 (ETEP…LVES) and 307-351 (DNEP…VDTT). 4 consecutive short sequence motifs (bipartite nuclear localization signal) follow at residues 94–104 (RCRRTDGKKWR), 122–129 (RGRKRSRK), 312–322 (RCRRTDGKKWR), and 340–345 (RGMKKK).

It belongs to the GRF family. Interacts with GIF1. Detected in the shoot apical meristem (SAM) and in young leaf primordium.

It localises to the nucleus. In terms of biological role, transcription activator that plays a role in the regulation of cell expansion in leaf and cotyledons tissues. Component of a network formed by miR396, the GRFs and their interacting factors (GIFs) acting in the regulation of meristem function, at least partially through the control of cell proliferation. The sequence is that of Growth-regulating factor 9 (GRF9) from Arabidopsis thaliana (Mouse-ear cress).